A 333-amino-acid chain; its full sequence is tRNA N6-adenosine threonylcarbamoyltransferase (333 aa).

The Fe cation site is built by H111 and H115. Residues 134 to 138 (LVSGG), D167, G180, and N272 contribute to the substrate site. D300 lines the Fe cation pocket.

This sequence belongs to the KAE1 / TsaD family. It depends on Fe(2+) as a cofactor.

It is found in the cytoplasm. The enzyme catalyses L-threonylcarbamoyladenylate + adenosine(37) in tRNA = N(6)-L-threonylcarbamoyladenosine(37) in tRNA + AMP + H(+). Required for the formation of a threonylcarbamoyl group on adenosine at position 37 (t(6)A37) in tRNAs that read codons beginning with adenine. Is involved in the transfer of the threonylcarbamoyl moiety of threonylcarbamoyl-AMP (TC-AMP) to the N6 group of A37, together with TsaE and TsaB. TsaD likely plays a direct catalytic role in this reaction. The sequence is that of tRNA N6-adenosine threonylcarbamoyltransferase from Legionella pneumophila (strain Corby).